A 293-amino-acid polypeptide reads, in one-letter code: MTNQQDYTQDNDKLYRYLFQHRAVRGEWVRLNKTFTDTLNTHQYPKAVQDLLGEMMVATNLLTATLKFDGNITVQIQGDGPLRLALVNGNDQQQIRALARVDGNITENMSLHNMIGKGVLVITIAPKEGERYQGVISLDKPTITECLEDYFVRSEQLQTQLIIRTGEYEGKPVAAGMLLQIMPDGSGTPEDFEHLTTLAATVKDEELFGLPAEELLYRLYHEETVNLYPAQDVQFFCGCSAERSSSALLLISDEEIDEILAEHKGSIDMQCECCGTHYFFNKEAIEKLKSTKV.

Intrachain disulfides connect Cys-237-Cys-239 and Cys-271-Cys-274.

Belongs to the HSP33 family. Under oxidizing conditions two disulfide bonds are formed involving the reactive cysteines. Under reducing conditions zinc is bound to the reactive cysteines and the protein is inactive.

The protein localises to the cytoplasm. Its function is as follows. Redox regulated molecular chaperone. Protects both thermally unfolding and oxidatively damaged proteins from irreversible aggregation. Plays an important role in the bacterial defense system toward oxidative stress. This Haemophilus influenzae (strain PittGG) protein is 33 kDa chaperonin.